Here is a 370-residue protein sequence, read N- to C-terminus: MTLPRSSRSVAVDGAQPYTITIAPGLLADDARLARHVRGRHALLLSDSQVAPHYAAGVRAALLSARPDLQIGELVIAAGEASKTLDTFGSAITALAELGATRDACVFALGGGVVGDLAGFAAACWMRGVDCVQLPTSLLAMVDSSVGGKTAVDIPQGKNLVGAFHPPRAVLADTDTLRTLPARELRAGLAEVIKYGAIRDPLFFQWLHAERHALLDSDPAALAQAIARSCEHKAEIVARDPLEKGERALLNLGHTFGHAIETEQGYGAPGNDNLNHGEAVAVGMVLAARLSATLGMSDAQDTEALRALLHDFELPTDIPPGLPPEALLARMRLDKKNIAGRLRLVLWRGIGKAEVVPDVEEAAVLKILAG.

Residues 112-116 (GVVGD), 136-137 (TS), lysine 149, lysine 158, and 176-179 (TLRT) contribute to the NAD(+) site. Positions 191, 254, and 276 each coordinate Zn(2+).

This sequence belongs to the sugar phosphate cyclases superfamily. Dehydroquinate synthase family. Co(2+) is required as a cofactor. Requires Zn(2+) as cofactor. The cofactor is NAD(+).

Its subcellular location is the cytoplasm. The enzyme catalyses 7-phospho-2-dehydro-3-deoxy-D-arabino-heptonate = 3-dehydroquinate + phosphate. It functions in the pathway metabolic intermediate biosynthesis; chorismate biosynthesis; chorismate from D-erythrose 4-phosphate and phosphoenolpyruvate: step 2/7. In terms of biological role, catalyzes the conversion of 3-deoxy-D-arabino-heptulosonate 7-phosphate (DAHP) to dehydroquinate (DHQ). The sequence is that of 3-dehydroquinate synthase from Xanthomonas oryzae pv. oryzae (strain PXO99A).